Here is a 414-residue protein sequence, read N- to C-terminus: Multifunctional CCA protein (414 aa).

Positions 8 and 11 each coordinate ATP. CTP-binding residues include glycine 8 and arginine 11. Residues glutamate 21 and aspartate 23 each coordinate Mg(2+). ATP contacts are provided by arginine 91, arginine 137, and arginine 140. CTP-binding residues include arginine 91, arginine 137, and arginine 140. Residues 228–329 form the HD domain; the sequence is TGIHTLMTLA…LKLFDAIDVW (102 aa).

This sequence belongs to the tRNA nucleotidyltransferase/poly(A) polymerase family. Bacterial CCA-adding enzyme type 1 subfamily. Monomer. Can also form homodimers and oligomers. Mg(2+) serves as cofactor. Ni(2+) is required as a cofactor.

It carries out the reaction a tRNA precursor + 2 CTP + ATP = a tRNA with a 3' CCA end + 3 diphosphate. It catalyses the reaction a tRNA with a 3' CCA end + 2 CTP + ATP = a tRNA with a 3' CCACCA end + 3 diphosphate. Its function is as follows. Catalyzes the addition and repair of the essential 3'-terminal CCA sequence in tRNAs without using a nucleic acid template. Adds these three nucleotides in the order of C, C, and A to the tRNA nucleotide-73, using CTP and ATP as substrates and producing inorganic pyrophosphate. tRNA 3'-terminal CCA addition is required both for tRNA processing and repair. Also involved in tRNA surveillance by mediating tandem CCA addition to generate a CCACCA at the 3' terminus of unstable tRNAs. While stable tRNAs receive only 3'-terminal CCA, unstable tRNAs are marked with CCACCA and rapidly degraded. In Yersinia enterocolitica serotype O:8 / biotype 1B (strain NCTC 13174 / 8081), this protein is Multifunctional CCA protein.